The primary structure comprises 149 residues: Large-conductance mechanosensitive channel (149 aa).

Transmembrane regions (helical) follow at residues 8-28 (FIMR…SAFT) and 74-94 (IGSV…LFLI).

It belongs to the MscL family. Homopentamer.

The protein localises to the cell membrane. Functionally, channel that opens in response to stretch forces in the membrane lipid bilayer. May participate in the regulation of osmotic pressure changes within the cell. The polypeptide is Large-conductance mechanosensitive channel (Enterococcus faecalis (strain ATCC 700802 / V583)).